A 272-amino-acid chain; its full sequence is Insulin-like growth factor-binding protein 1 (272 aa).

The N-terminal stretch at 1–25 is a signal peptide; the sequence is MPEFLTVVSWPFLILLSFQIGVAAG. One can recognise an IGFBP N-terminal domain in the interval 28-109; that stretch reads QPWHCAPCTA…TRGQGACVPE (82 aa). Intrachain disulfides connect Cys32–Cys59, Cys35–Cys61, Cys43–Cys62, Cys50–Cys65, Cys73–Cys86, and Cys80–Cys106. Phosphoserine occurs at positions 139, 157, and 169. Position 170 is a phosphothreonine (Thr170). A Phosphotyrosine modification is found at Tyr171. A Thyroglobulin type-1 domain is found at 186-264; sequence KEPCQRELYK…SLETRGDPNC (79 aa). 3 disulfide bridges follow: Cys189/Cys219, Cys230/Cys241, and Cys243/Cys264. Ser255 carries the phosphoserine modification. The Cell attachment site motif lies at 259-261; the sequence is RGD.

Binds equally well IGF1 and IGF2. Interacts with integrin ITGA5:ITGB1. Interacts with VHL; this interaction inhibits HIF1A degradation.

It is found in the secreted. In terms of biological role, multifunctional protein that plays a critical role in regulating the availability of IGFs such as IGF1 and IGF2 to their receptors and thereby regulates IGF-mediated cellular processes including cell migration, proliferation, differentiation or apoptosis in a cell-type specific manner. Also plays a positive role in cell migration by interacting with integrin ITGA5:ITGB1 through its RGD motif. Mechanistically, binding to integrins leads to activation of focal adhesion kinase/PTK2 and stimulation of the mitogen-activated protein kinase (MAPK) pathway. Regulates cardiomyocyte apoptosis by suppressing HIF-1alpha/HIF1A ubiquitination and subsequent degradation. The sequence is that of Insulin-like growth factor-binding protein 1 (Igfbp1) from Mus musculus (Mouse).